The following is a 155-amino-acid chain: Small ribosomal subunit protein uS7 (155 aa).

The protein belongs to the universal ribosomal protein uS7 family. In terms of assembly, part of the 30S ribosomal subunit. Contacts proteins S9 and S11.

One of the primary rRNA binding proteins, it binds directly to 16S rRNA where it nucleates assembly of the head domain of the 30S subunit. Is located at the subunit interface close to the decoding center, probably blocks exit of the E-site tRNA. This is Small ribosomal subunit protein uS7 from Pelodictyon phaeoclathratiforme (strain DSM 5477 / BU-1).